A 464-amino-acid polypeptide reads, in one-letter code: Flavin-containing monooxygenase FMO GS-OX-like 7 (464 aa).

Gly18–Gly23 provides a ligand contact to FAD. Gly214–Gly219 contributes to the NADP(+) binding site.

This sequence belongs to the FMO family. FAD serves as cofactor.

Its function is as follows. Catalyzes the conversion of methylthioalkyl glucosinolates of any chain length into methylsulfinylalkyl glucosinolates. The protein is Flavin-containing monooxygenase FMO GS-OX-like 7 of Arabidopsis thaliana (Mouse-ear cress).